Reading from the N-terminus, the 179-residue chain is Large ribosomal subunit protein uL6 (179 aa).

The protein belongs to the universal ribosomal protein uL6 family. Part of the 50S ribosomal subunit.

This protein binds to the 23S rRNA, and is important in its secondary structure. It is located near the subunit interface in the base of the L7/L12 stalk, and near the tRNA binding site of the peptidyltransferase center. In Acidobacterium capsulatum (strain ATCC 51196 / DSM 11244 / BCRC 80197 / JCM 7670 / NBRC 15755 / NCIMB 13165 / 161), this protein is Large ribosomal subunit protein uL6.